Reading from the N-terminus, the 253-residue chain is Ribonuclease HII (253 aa).

An RNase H type-2 domain is found at N70 to L253. The a divalent metal cation site is built by D76, E77, and D168.

Belongs to the RNase HII family. Mn(2+) is required as a cofactor. Mg(2+) serves as cofactor.

The protein resides in the cytoplasm. The catalysed reaction is Endonucleolytic cleavage to 5'-phosphomonoester.. Functionally, endonuclease that specifically degrades the RNA of RNA-DNA hybrids. This Streptococcus agalactiae serotype Ia (strain ATCC 27591 / A909 / CDC SS700) protein is Ribonuclease HII.